Consider the following 377-residue polypeptide: DNA-directed RNA polymerase subunit alpha (377 aa).

Residues M1 to D259 are alpha N-terminal domain (alpha-NTD). Residues K276–G377 are alpha C-terminal domain (alpha-CTD).

The protein belongs to the RNA polymerase alpha chain family. As to quaternary structure, homodimer. The RNAP catalytic core consists of 2 alpha, 1 beta, 1 beta' and 1 omega subunit. When a sigma factor is associated with the core the holoenzyme is formed, which can initiate transcription.

The catalysed reaction is RNA(n) + a ribonucleoside 5'-triphosphate = RNA(n+1) + diphosphate. Its function is as follows. DNA-dependent RNA polymerase catalyzes the transcription of DNA into RNA using the four ribonucleoside triphosphates as substrates. In Chlamydia trachomatis serovar D (strain ATCC VR-885 / DSM 19411 / UW-3/Cx), this protein is DNA-directed RNA polymerase subunit alpha.